We begin with the raw amino-acid sequence, 100 residues long: DNA-directed RNA polymerase subunit Rpo11 (100 aa).

The protein belongs to the archaeal Rpo11/eukaryotic RPB11/RPC19 RNA polymerase subunit family. In terms of assembly, part of the RNA polymerase complex.

It localises to the cytoplasm. The catalysed reaction is RNA(n) + a ribonucleoside 5'-triphosphate = RNA(n+1) + diphosphate. In terms of biological role, DNA-dependent RNA polymerase (RNAP) catalyzes the transcription of DNA into RNA using the four ribonucleoside triphosphates as substrates. The chain is DNA-directed RNA polymerase subunit Rpo11 from Picrophilus torridus (strain ATCC 700027 / DSM 9790 / JCM 10055 / NBRC 100828 / KAW 2/3).